Reading from the N-terminus, the 402-residue chain is Phosphoglycerate kinase (402 aa).

Residues D24–N26, R39, H62–R65, R121, and R161 contribute to the substrate site. ATP contacts are provided by residues K211, G299, E330, and G359 to S362.

It belongs to the phosphoglycerate kinase family. As to quaternary structure, monomer.

The protein resides in the cytoplasm. The enzyme catalyses (2R)-3-phosphoglycerate + ATP = (2R)-3-phospho-glyceroyl phosphate + ADP. The protein operates within carbohydrate degradation; glycolysis; pyruvate from D-glyceraldehyde 3-phosphate: step 2/5. The chain is Phosphoglycerate kinase from Corynebacterium urealyticum (strain ATCC 43042 / DSM 7109).